The primary structure comprises 183 residues: ATP-dependent protease subunit HslV (183 aa).

The active site involves threonine 13. Na(+) contacts are provided by glycine 168, cysteine 171, and threonine 174.

The protein belongs to the peptidase T1B family. HslV subfamily. As to quaternary structure, a double ring-shaped homohexamer of HslV is capped on each side by a ring-shaped HslU homohexamer. The assembly of the HslU/HslV complex is dependent on binding of ATP.

It localises to the cytoplasm. It catalyses the reaction ATP-dependent cleavage of peptide bonds with broad specificity.. Its activity is regulated as follows. Allosterically activated by HslU binding. In terms of biological role, protease subunit of a proteasome-like degradation complex believed to be a general protein degrading machinery. The protein is ATP-dependent protease subunit HslV of Stenotrophomonas maltophilia (strain R551-3).